Reading from the N-terminus, the 358-residue chain is Protein RecA (358 aa).

69–76 (GPESSGKT) is an ATP binding site.

The protein belongs to the RecA family.

It localises to the cytoplasm. Can catalyze the hydrolysis of ATP in the presence of single-stranded DNA, the ATP-dependent uptake of single-stranded DNA by duplex DNA, and the ATP-dependent hybridization of homologous single-stranded DNAs. It interacts with LexA causing its activation and leading to its autocatalytic cleavage. The protein is Protein RecA of Trichormus variabilis (strain ATCC 29413 / PCC 7937) (Anabaena variabilis).